Consider the following 121-residue polypeptide: Small ribosomal subunit protein uS13 (121 aa).

Residues histidine 91–lysine 121 are disordered. Residues glutamine 100 to lysine 121 show a composition bias toward basic residues.

The protein belongs to the universal ribosomal protein uS13 family. As to quaternary structure, part of the 30S ribosomal subunit. Forms a loose heterodimer with protein S19. Forms two bridges to the 50S subunit in the 70S ribosome.

Located at the top of the head of the 30S subunit, it contacts several helices of the 16S rRNA. In the 70S ribosome it contacts the 23S rRNA (bridge B1a) and protein L5 of the 50S subunit (bridge B1b), connecting the 2 subunits; these bridges are implicated in subunit movement. Contacts the tRNAs in the A and P-sites. This Prochlorococcus marinus (strain MIT 9211) protein is Small ribosomal subunit protein uS13.